The following is a 343-amino-acid chain: MAIKLAINGFGRIGRNIVRALYESGLSNEIKIVAINELADPEAIAHLLKYDTSHGRFFFPVKLGEDTISVAGDAIALFCEPNPAELPWKTLGVDVVLECTGVYHSREHAQLHLTAGAKKVLFSHPADNDVDATIVYGINDDELKPEHTIVSNGSCTTNCVVPVIKVLDDAFGIESGAITTIHASMNDQPVIDAYHHDLRRTRAASQSIIPVDTKLARGIDRILPKFKGRFEAIAVRVPTINVTAMDLSVTVNTDVDLNAVNNALKAQAKDRLEGILSYTAEPLVSIDFNHDPHSCIIDGTQTRVSHKRLIKLLVWCDNEWGFANRMLDTARAMVALEKITNIK.

Residue 12-13 (RI) coordinates NAD(+). Substrate contacts are provided by residues 154–156 (SCT), Arg200, 213–214 (TK), and Arg236. Cys155 serves as the catalytic Nucleophile. Asn318 is an NAD(+) binding site.

Belongs to the glyceraldehyde-3-phosphate dehydrogenase family. Epd subfamily. As to quaternary structure, homotetramer.

The protein resides in the cytoplasm. The enzyme catalyses D-erythrose 4-phosphate + NAD(+) + H2O = 4-phospho-D-erythronate + NADH + 2 H(+). It functions in the pathway cofactor biosynthesis; pyridoxine 5'-phosphate biosynthesis; pyridoxine 5'-phosphate from D-erythrose 4-phosphate: step 1/5. Functionally, catalyzes the NAD-dependent conversion of D-erythrose 4-phosphate to 4-phosphoerythronate. This chain is D-erythrose-4-phosphate dehydrogenase, found in Pseudoalteromonas translucida (strain TAC 125).